We begin with the raw amino-acid sequence, 330 residues long: Glucokinase (330 aa).

This sequence belongs to the ROK (NagC/XylR) family.

It is found in the cytoplasm. It catalyses the reaction D-glucose + ATP = D-glucose 6-phosphate + ADP + H(+). This is Glucokinase (glcK) from Halalkalibacterium halodurans (strain ATCC BAA-125 / DSM 18197 / FERM 7344 / JCM 9153 / C-125) (Bacillus halodurans).